Consider the following 697-residue polypeptide: Putative flagellar export/assembly protein LfhA (697 aa).

Transmembrane regions (helical) follow at residues 19–39 (VPLV…PALL), 40–60 (DILF…AVSA), 66–86 (FSLF…LNVA), 116–136 (GNFV…FIVV), 204–224 (AIAG…IGIF), 242–262 (IGDG…AAII), and 280–302 (LLAS…VVPG).

Belongs to the FHIPEP (flagella/HR/invasion proteins export pore) family.

The protein localises to the cell inner membrane. Functionally, part of the flagellar gene cluster Flag-2. However, the Flag-2 flagellar system could be inactive in strain 042 due to a frameshift in lfgC. In Escherichia coli O44:H18 (strain 042 / EAEC), this protein is Putative flagellar export/assembly protein LfhA.